The sequence spans 637 residues: Sodium-dependent proline transporter (637 aa).

The Cytoplasmic portion of the chain corresponds to 1-45; it reads MKKLQEAHLRKPITPDLLMTPSDQGDVDLDVDFAADRGNWTGKLD. Phosphothreonine is present on Thr-20. Residue Ser-22 is modified to Phosphoserine. 3 consecutive transmembrane segments (helical) span residues 46 to 66, 74 to 93, and 117 to 137; these read FLLSCIGYCVGLGNVWRFPYR, AFLVPYFLMLAICGIPLFFL, and GAGAAMLLIVGLVAIYYNMII. The Extracellular segment spans residues 138-214; it reads AYVLFYLFAS…QGIGRPGEIR (77 aa). Asn-182 carries an N-linked (GlcNAc...) asparagine glycan. Transmembrane regions (helical) follow at residues 215–233, 242–259, 295–312, 324–345, 378–397, 425–443, 459–479, 500–519, and 538–556; these read WNLCLCLLLAWVIVFLCIL, VVYFTATFPYLILLMLLV, IFYSLGVGFGGLLTFASY, FIVTLGNAITSILAGFAIFSVL, LPLSPFWSFLFFFMLLTLGL, VFSGLICVAMYLMGLILTT, SFGLMVVVITTCLAVTRVYGI, ACWLFLSPATLLALLVYSIV, and LGILMGLLSCLMIPAGMLV. Residues 557–637 are Cytoplasmic-facing; the sequence is AVLREEGSLW…IAEEEEESMM (81 aa). Ser-573 and Ser-582 each carry phosphoserine. Thr-588 is subject to Phosphothreonine. A Phosphotyrosine modification is found at Tyr-591. 2 positions are modified to phosphoserine: Ser-598 and Ser-600.

It belongs to the sodium:neurotransmitter symporter (SNF) (TC 2.A.22) family. SLC6A7 subfamily.

The protein resides in the synaptic cell membrane. The enzyme catalyses L-proline(out) + chloride(out) + 2 Na(+)(out) = L-proline(in) + chloride(in) + 2 Na(+)(in). It catalyses the reaction L-pipecolate(out) + chloride(out) + 2 Na(+)(out) = L-pipecolate(in) + chloride(in) + 2 Na(+)(in). Its function is as follows. Brain specific sodium (and chloride)-dependent proline transporter. Terminates the action of proline by its high affinity sodium-dependent reuptake into presynaptic terminals. The chain is Sodium-dependent proline transporter from Mus musculus (Mouse).